The sequence spans 382 residues: Sphingoid long-chain base transporter RSB1 (382 aa).

Over 1–34 the chain is Extracellular; the sequence is MSNATNNTLGSLLPQLEAAANSNSLYGGMVPNLR. Asn-3 and Asn-6 each carry an N-linked (GlcNAc...) asparagine glycan. The chain crosses the membrane as a helical span at residues 35-55; the sequence is FNITMIVIWGILLTIHVVQLL. Over 56–57 the chain is Cytoplasmic; that stretch reads MR. Residues 58 to 78 traverse the membrane as a helical segment; the sequence is QYWFSIAFICTGILEVLGFIG. At 79 to 90 the chain is on the extracellular side; the sequence is RTWSHSNVADMD. Residues 91-111 traverse the membrane as a helical segment; the sequence is AFLLNMICLTIAPVFTMGGIY. Over 112 to 135 the chain is Cytoplasmic; sequence YQLAKLIEVYGHRFSLLPSPMAYS. A helical membrane pass occupies residues 136 to 156; the sequence is FIFICSDIVSLVVQAVGGGLC. Over 157-171 the chain is Extracellular; the sequence is GVAVTDGTSTTTGNH. The chain crosses the membrane as a helical span at residues 172–192; sequence VFIAGLAIQVASMAIFLMLWF. Residues 193–241 lie on the Cytoplasmic side of the membrane; the sequence is HFLFRIYISVRWEHINSRPISLSLLKISQTEVDYLYREKFHFLRLEPKR. The helical transmembrane segment at 242 to 262 threads the bilayer; that stretch reads WVFHYFNLAITVAVLTIFTRC. The Extracellular segment spans residues 263–281; it reads CYRLAELVVGWDGYLITHE. The chain crosses the membrane as a helical span at residues 282–302; that stretch reads WYFIILDALMMAIATVTLTIF. The Cytoplasmic segment spans residues 303–382; that stretch reads HPGFAFKGKS…LFSSKKKAKL (80 aa).

The protein belongs to the lipid-translocating exporter (LTE) (TC 9.A.26.1) family.

Its subcellular location is the cell membrane. Functionally, catalyzes the ATP-dependent translocation of sphingoid long-chain bases (LCBs) from the cytoplasmic site toward the extracytoplasmic side of the membrane (flip-flop). Involved in the establishment of the functional lipid asymmetry of the plasma membrane. Regulates intracellular levels of LCBs, sphingolipid precursors that are growth inhibitory at increased levels. The protein is Sphingoid long-chain base transporter RSB1 (RSB1) of Saccharomyces cerevisiae (strain JAY291) (Baker's yeast).